A 453-amino-acid chain; its full sequence is Ribulose bisphosphate carboxylase large chain (453 aa).

The propeptide occupies 1–2; the sequence is MS. At Pro3 the chain carries N-acetylproline. Lys14 carries the N6,N6,N6-trimethyllysine modification. Positions 123 and 173 each coordinate substrate. Lys175 functions as the Proton acceptor in the catalytic mechanism. Lys177 provides a ligand contact to substrate. Mg(2+) contacts are provided by Lys201, Asp203, and Glu204. At Lys201 the chain carries N6-carboxylysine. The Proton acceptor role is filled by His294. Residues Arg295, His327, and Ser379 each coordinate substrate.

The protein belongs to the RuBisCO large chain family. Type I subfamily. Heterohexadecamer of 8 large chains and 8 small chains; disulfide-linked. The disulfide link is formed within the large subunit homodimers. Requires Mg(2+) as cofactor. In terms of processing, the disulfide bond which can form in the large chain dimeric partners within the hexadecamer appears to be associated with oxidative stress and protein turnover.

It is found in the plastid. It localises to the chloroplast. The enzyme catalyses 2 (2R)-3-phosphoglycerate + 2 H(+) = D-ribulose 1,5-bisphosphate + CO2 + H2O. It carries out the reaction D-ribulose 1,5-bisphosphate + O2 = 2-phosphoglycolate + (2R)-3-phosphoglycerate + 2 H(+). Functionally, ruBisCO catalyzes two reactions: the carboxylation of D-ribulose 1,5-bisphosphate, the primary event in carbon dioxide fixation, as well as the oxidative fragmentation of the pentose substrate in the photorespiration process. Both reactions occur simultaneously and in competition at the same active site. The polypeptide is Ribulose bisphosphate carboxylase large chain (Galium palustre (Common marsh bedstraw)).